A 146-amino-acid chain; its full sequence is Prolactin-inducible protein (146 aa).

The signal sequence occupies residues 1–28; the sequence is MRLLQLLFRASPATLLLVLCLQLGANKA. Gln-29 carries the post-translational modification Pyrrolidone carboxylic acid. Cystine bridges form between Cys-65–Cys-91 and Cys-89–Cys-123. Residue Asn-105 is glycosylated (N-linked (GlcNAc...) asparagine).

It belongs to the PIP family. In terms of assembly, monomer. Interacts with AZGP1. Expressed in pathological conditions of the mammary gland and in several exocrine tissues, such as the lacrimal, salivary, and sweat glands.

The protein localises to the secreted. The sequence is that of Prolactin-inducible protein (PIP) from Homo sapiens (Human).